The primary structure comprises 533 residues: CTP synthase (533 aa).

Residues 1–265 (MTKFIFVTGG…PAYLARRLGL (265 aa)) form an amidoligase domain region. Position 13 (serine 13) interacts with CTP. Position 13 (serine 13) interacts with UTP. ATP is bound at residue 14–19 (GLGKGI). Tyrosine 54 contributes to the L-glutamine binding site. Aspartate 71 serves as a coordination point for ATP. Residues aspartate 71 and glutamate 139 each coordinate Mg(2+). Residues 146-148 (DIE), 186-191 (KTKPTQ), and lysine 222 each bind CTP. Residues 186–191 (KTKPTQ) and lysine 222 contribute to the UTP site. One can recognise a Glutamine amidotransferase type-1 domain in the interval 290-532 (EIAIVGKYVK…VEAAKKKKYG (243 aa)). Position 351 (glycine 351) interacts with L-glutamine. Cysteine 378 (nucleophile; for glutamine hydrolysis) is an active-site residue. Residues 379-382 (FGFQ), glutamate 402, and arginine 459 contribute to the L-glutamine site. Residues histidine 505 and glutamate 507 contribute to the active site.

Belongs to the CTP synthase family. Homotetramer.

It carries out the reaction UTP + L-glutamine + ATP + H2O = CTP + L-glutamate + ADP + phosphate + 2 H(+). It catalyses the reaction L-glutamine + H2O = L-glutamate + NH4(+). The catalysed reaction is UTP + NH4(+) + ATP = CTP + ADP + phosphate + 2 H(+). The protein operates within pyrimidine metabolism; CTP biosynthesis via de novo pathway; CTP from UDP: step 2/2. Allosterically activated by GTP, when glutamine is the substrate; GTP has no effect on the reaction when ammonia is the substrate. The allosteric effector GTP functions by stabilizing the protein conformation that binds the tetrahedral intermediate(s) formed during glutamine hydrolysis. Inhibited by the product CTP, via allosteric rather than competitive inhibition. In terms of biological role, catalyzes the ATP-dependent amination of UTP to CTP with either L-glutamine or ammonia as the source of nitrogen. Regulates intracellular CTP levels through interactions with the four ribonucleotide triphosphates. The polypeptide is CTP synthase (Thermococcus kodakarensis (strain ATCC BAA-918 / JCM 12380 / KOD1) (Pyrococcus kodakaraensis (strain KOD1))).